Consider the following 847-residue polypeptide: Endo-beta-N-acetylglucosaminidase EndoSd (847 aa).

Positions 1–36 (MDKRLLVKRTLGCVCAATLMGAILATHHDSLISVKA) are cleaved as a signal peptide. A GH18 domain is found at 65-377 (PLYAGYFRTW…HPVVDNISHT (313 aa)). H107 lines the a glycoprotein pocket. E186 (proton donor) is an active-site residue. Positions 188, 250, 252, 288, 289, 295, and 339 each coordinate a glycoprotein. 4 LRR repeats span residues 423–446 (LERY…LEKL), 447–470 (SHLQ…ILPE), 483–506 (MTGL…DVNG), and 507–530 (LTHL…ADRK). Residues 683–836 (MENLAKGAKV…YTELQILGQR (154 aa)) are carbohydrate-binding module (CBM). Ca(2+) contacts are provided by K704, D707, and E829.

This sequence belongs to the glycosyl hydrolase 18 family.

It is found in the secreted. The protein resides in the host extracellular space. The catalysed reaction is an N(4)-(oligosaccharide-(1-&gt;3)-[oligosaccharide-(1-&gt;6)]-beta-D-Man-(1-&gt;4)-beta-D-GlcNAc-(1-&gt;4)-alpha-D-GlcNAc)-L-asparaginyl-[protein] + H2O = an oligosaccharide-(1-&gt;3)-[oligosaccharide-(1-&gt;6)]-beta-D-Man-(1-&gt;4)-D-GlcNAc + N(4)-(N-acetyl-beta-D-glucosaminyl)-L-asparaginyl-[protein]. In terms of biological role, endoglucosidase that acts as a host immune evasion factor by mediating hydrolysis of the N-linked glycan from the Fc region of host immunoglobulin-gamma (IgG) during infection. Specifically catalyzes the hydrolysis of the beta-1,4 linkage between the first two N-acetylglucosamine residues of the complex-type N-linked glycan located on 'Asn-297' of the Fc region of IgG antibodies (IGHG1, IGHG2, IGHG3 or IGHG4), thereby preventing interaction between IgGs and Fc receptors and ability to activate the complement pathway. Shows a specificity for biantennary complex type N-glycans; does neither cleave larger complex type glycans nor oligomannose and nor hybrid-type glycans. Specifically acts on IgGs; does not act on immunoglobulin alpha, beta, delta or mu. The polypeptide is Endo-beta-N-acetylglucosaminidase EndoSd (Streptococcus dysgalactiae).